The sequence spans 1143 residues: Condensin-2 complex subunit G2 (1143 aa).

Residue Ser-30 is modified to Phosphoserine. The HEAT repeat unit spans residues 460-498 (LLPALRYSLHDNSEKVRVAFVDMLLKIKAVRAAKFWKIC). Thr-805 and Thr-1119 each carry phosphothreonine.

In terms of assembly, component of the condensin-2 complex, which contains the SMC2 and SMC4 heterodimer, and 3 non SMC subunits that probably regulate the complex: NCAPH2, NCAPD3 and NCAPG2.

Its subcellular location is the nucleus. In terms of biological role, regulatory subunit of the condensin-2 complex, a complex which establishes mitotic chromosome architecture and is involved in physical rigidity of the chromatid axis. This Homo sapiens (Human) protein is Condensin-2 complex subunit G2 (NCAPG2).